Reading from the N-terminus, the 219-residue chain is GTP cyclohydrolase-2 (219 aa).

GTP is bound at residue Arg51–Glu55. Positions 56, 67, and 69 each coordinate Zn(2+). Residues Gln72, Glu94 to Arg96, and Thr116 each bind GTP. The active-site Proton acceptor is Asp128. The active-site Nucleophile is the Arg130. 2 residues coordinate GTP: Thr151 and Lys156.

The protein belongs to the GTP cyclohydrolase II family. Requires Zn(2+) as cofactor.

The catalysed reaction is GTP + 4 H2O = 2,5-diamino-6-hydroxy-4-(5-phosphoribosylamino)-pyrimidine + formate + 2 phosphate + 3 H(+). Its pathway is cofactor biosynthesis; riboflavin biosynthesis; 5-amino-6-(D-ribitylamino)uracil from GTP: step 1/4. Catalyzes the conversion of GTP to 2,5-diamino-6-ribosylamino-4(3H)-pyrimidinone 5'-phosphate (DARP), formate and pyrophosphate. The sequence is that of GTP cyclohydrolase-2 from Pasteurella multocida (strain Pm70).